The sequence spans 328 residues: Phenylalanine--tRNA ligase alpha subunit (328 aa).

Residue Glu245 coordinates Mg(2+).

It belongs to the class-II aminoacyl-tRNA synthetase family. Phe-tRNA synthetase alpha subunit type 1 subfamily. In terms of assembly, tetramer of two alpha and two beta subunits. Requires Mg(2+) as cofactor.

It localises to the cytoplasm. The enzyme catalyses tRNA(Phe) + L-phenylalanine + ATP = L-phenylalanyl-tRNA(Phe) + AMP + diphosphate + H(+). In Helicobacter pylori (strain P12), this protein is Phenylalanine--tRNA ligase alpha subunit.